The primary structure comprises 310 residues: Porphobilinogen deaminase (310 aa).

The residue at position 242 (Cys-242) is an S-(dipyrrolylmethanemethyl)cysteine.

The protein belongs to the HMBS family. Monomer. Dipyrromethane serves as cofactor.

The catalysed reaction is 4 porphobilinogen + H2O = hydroxymethylbilane + 4 NH4(+). The protein operates within porphyrin-containing compound metabolism; protoporphyrin-IX biosynthesis; coproporphyrinogen-III from 5-aminolevulinate: step 2/4. Its function is as follows. Tetrapolymerization of the monopyrrole PBG into the hydroxymethylbilane pre-uroporphyrinogen in several discrete steps. The sequence is that of Porphobilinogen deaminase from Shewanella sp. (strain W3-18-1).